Consider the following 719-residue polypeptide: MATSPAEPSAGPAARGEAAAATEEQEEEARQLLQTLQAAEGEAAAAGAGDAAAAADSGSPSGPGSPRETVTEVPTGLRFSPEQVACVCEALLQAGHAGRLSRFLGALPPAERLRGSDPVLRARALVAFQRGEYAELYQLLESRPFPAAHHAFLQDLYLRARYHEAERARGRALGAVDKYRLRKKFPLPKTIWDGEETVYCFKERSRAALKACYRGNRYPTPDEKRRLATLTGLSLTQVSNWFKNRRQRDRTGTGGGAPCKSESDGNPTTEDESSRSPEDLERGVASMAAEAPAQSSIFLAGATSPATCPASSSILVNGSFLAASSPPAVLLNGSPVIINSLALGENSSLGPLLLTGGSAPQPQPSLQGVSEAKNSLVLDPQTGEVRLDEAQSEAPETKGVHGTTGEEIPGALPQVVPGPPPASTFPLTPGAVPAVAAPQVVPLSPSSGYPTGLSPTSPRLNLPQVVPTSQVVTLPQAVGPLQLLAAGPGSPVKVAAAAGPTNVHLINSSVGVTALQLPSSTAPGNFLLANPVSGSPIVTGVAVQQGKIILTATFPTSMLVSQVLPPAPSLALPLKQEPAITVPEGALPVGPSPTLPEGHTLGPISTQPLPPASVVTSGTSLPFSPDSSGLLSSFSAPLPEGLMLSPAAVPVWPAGLELSTGVEGLGTQATHTVLRLPDPDPQGLLLGATTGTEVDEGLEAEAKVLTQLQSVPVEEPLEL.

Low complexity-rich tracts occupy residues 1–22 (MATS…AAAT) and 31–65 (QLLQ…GPGS). Disordered regions lie at residues 1 to 73 (MATS…VTEV) and 241 to 287 (WFKN…VASM). Positions 194 to 253 (GEETVYCFKERSRAALKACYRGNRYPTPDEKRRLATLTGLSLTQVSNWFKNRRQRDRTGT) form a DNA-binding region, homeobox. The span at 272-282 (ESSRSPEDLER) shows a compositional bias: basic and acidic residues.

This sequence belongs to the SIX/Sine oculis homeobox family. In terms of assembly, probably binds DNA dimer. Interacts with EYA3, and probably EYA1 and EYA2.

It is found in the nucleus. Its function is as follows. Transcription factor that is thought to be involved in regulation of organogenesis. May be involved in determination and maintenance of retina formation. Binds a 5'-GGTGTCAG-3' motif present in the ARE regulatory element of ATP1A1. Binds a 5'-TCA[AG][AG]TTNC-3' motif present in the MEF3 element in the myogenin promoter, and in the IGFBP5 promoter. Thought to be regulated by association with Dach and Eya proteins, and seems to be coactivated by EYA1, EYA2 and EYA3. The polypeptide is Homeobox protein SIX5 (Six5) (Mus musculus (Mouse)).